A 106-amino-acid polypeptide reads, in one-letter code: Guianensin (106 aa).

The N-terminal stretch at 1–19 (MKIALICSVFLVCLAYTWA) is a signal peptide. The region spanning 24-74 (CSLPMNDGLCRALHKRYYYDSATKTCKMFYYGGCAGNANNFETKRACAEKC) is the BPTI/Kunitz inhibitor domain. 3 cysteine pairs are disulfide-bonded: C24–C74, C33–C57, and C49–C70. Over residues 84–93 (RKRKPKKKKN) the composition is skewed to basic residues. The tract at residues 84-106 (RKRKPKKKKNNKESSEMTIINMD) is disordered.

It belongs to the venom Kunitz-type family. Monomer. Interacts with mouse, bovine and human coagulation factor X (F10) (activated). Interacts with human coagulation factor XI (F11) (activated). Interacts with human coagulation factor IX (F9) (activated). Interacts with host plasmin (PLG). Interacts with host kallikrein. In terms of tissue distribution, female salivary gland (at protein level).

Its subcellular location is the secreted. Functionally, salivary anticoagulant that targets host coagulation factor Xa (F10). Blocks activity of host prothrombinase (F10-F5). Inhibits factor Xa-mediated acute inflammation in the host. Inhibits other host proteases involved in blood coagulation and inflammation: cathepsin G (CTSG), kallikrein, trypsin, alpha-chymotrypsin, beta-tryptase, plasmin (PLG), elastase, proteinase 3 (PRTN3) and coagulation factor XIa (F11). Inhibits lipopolysaccharide-induced procoagulant effect in human endothelial cells. Inhibits Xa-mediated cleavage of protease-activated receptor 2 (PAR-2/F2RL1) in the host. The protein is Guianensin of Simulium guianense (Black fly).